Reading from the N-terminus, the 81-residue chain is uncharacterized protein (81 aa).

This is an uncharacterized protein from Archaeoglobus fulgidus (strain ATCC 49558 / DSM 4304 / JCM 9628 / NBRC 100126 / VC-16).